A 278-amino-acid polypeptide reads, in one-letter code: Large ribosomal subunit protein uL2 (278 aa).

Disordered regions lie at residues 29–53 and 223–278; these read PEKS…TTRH and GVAM…GKKR. Residues 255–268 are compositionally biased toward basic and acidic residues; the sequence is GRTRRPGKESDKLI. Over residues 269–278 the composition is skewed to basic residues; that stretch reads VRRRRTGKKR.

It belongs to the universal ribosomal protein uL2 family. In terms of assembly, part of the 50S ribosomal subunit. Forms a bridge to the 30S subunit in the 70S ribosome.

One of the primary rRNA binding proteins. Required for association of the 30S and 50S subunits to form the 70S ribosome, for tRNA binding and peptide bond formation. It has been suggested to have peptidyltransferase activity; this is somewhat controversial. Makes several contacts with the 16S rRNA in the 70S ribosome. In Kineococcus radiotolerans (strain ATCC BAA-149 / DSM 14245 / SRS30216), this protein is Large ribosomal subunit protein uL2.